Consider the following 880-residue polypeptide: MAQCSDLPEMAKAYEAAEVEKKWYQYWMEKSYFKPNPNSDKKPFVIIMPPPNVTGELHLGHALTATLEDIMIRWHRMQGEPTLWLPGVDHAGIAAQVVVERELAKQGKTRQQLGRELFLEKMWEWVNPCREKIRHQHMRLGASCDWDRETFTLDAGPVKAVREIFTNLYEKGLIYKGERIINWCPRCGTAVSDLEVDHKDLAGHIWHLRYPLEDGSGFVTVATTRPETMQGDTAVAIHPDDTRYAGMVGKNVVLPIMNRRIPVIADEAVDMAFGTGAVKVTPAHDPNDFEMGLRHNLPMITIQNRDTTMNENAGPCSGMTAKACREYVVSEMKSLGLLLRIEDYIHSVGHCQRCSAVIEPMVSKQWFVKMEPLAKPALEAVNSGRIQILPERFNKVYQNWMENIRDWCISRQLWWGHRIPVWYCPCGEMIVAKVDPTVCPKCGGTELEQDPDVLDTWFSSGLWPHSTLGWPDQTEDLKRFYPGTVMETAYDIIFFWVARMIVMGMEDMNEVPFRTVYLHGLIRDDKGEKMSKTKGNVIDPLKVIDQYGTDALRFAVTFGTSPGNDSKLGQTKLEAARNFANKLWNASRFVIMNLGEAKELTPEAELPLEDRWIISRMNRVTADVTRLMEEFQFGEAQRVLQDFIWGEFCDWYIELAKVRLRDEASVSPRPVLVRVLSSILRLLHPYMPFITEELWSYLRPYLPESLRETDIIVAPYPAADKTCFDEQAESVMGSLVEIVRSLRNLRAEHNVEISRYIQANIYAGDMASVLGNYLGAVETLSRARPVNILPGHYSGASTATEVVLVLTGIEVVVPMSTMVDLEVEAKRVKAEISELEIQIERLSTRLSDEQFLAKAPQAVVDKERIKLEGYIEKVSRLKSA.

The short motif at 51 to 61 is the 'HIGH' region element; it reads PNVTGELHLGH. The short motif at 529 to 533 is the 'KMSKS' region element; that stretch reads KMSKT. Lysine 532 is an ATP binding site. Positions 815–854 form a coiled coil; that stretch reads MSTMVDLEVEAKRVKAEISELEIQIERLSTRLSDEQFLAK.

The protein belongs to the class-I aminoacyl-tRNA synthetase family. ValS type 1 subfamily. In terms of assembly, monomer.

The protein localises to the cytoplasm. The catalysed reaction is tRNA(Val) + L-valine + ATP = L-valyl-tRNA(Val) + AMP + diphosphate. Its function is as follows. Catalyzes the attachment of valine to tRNA(Val). As ValRS can inadvertently accommodate and process structurally similar amino acids such as threonine, to avoid such errors, it has a 'posttransfer' editing activity that hydrolyzes mischarged Thr-tRNA(Val) in a tRNA-dependent manner. This chain is Valine--tRNA ligase, found in Dehalococcoides mccartyi (strain CBDB1).